Consider the following 310-residue polypeptide: 4-hydroxyproline 2-epimerase (310 aa).

Cys88 serves as the catalytic Proton acceptor. Residues Gly89–His90, His208, and Asp232 contribute to the substrate site. The active-site Proton donor is Cys236. Gly237–Thr238 provides a ligand contact to substrate.

This sequence belongs to the proline racemase family.

The enzyme catalyses trans-4-hydroxy-L-proline = cis-4-hydroxy-D-proline. Its function is as follows. Catalyzes the epimerization of trans-4-hydroxy-L-proline (t4LHyp) to cis-4-hydroxy-D-proline (c4DHyp). Is likely involved in a degradation pathway that converts t4LHyp to alpha-ketoglutarate. Displays no proline racemase activity. This chain is 4-hydroxyproline 2-epimerase, found in Pseudomonas fluorescens (strain ATCC BAA-477 / NRRL B-23932 / Pf-5).